Reading from the N-terminus, the 625-residue chain is Pyriculol/pyriculariol biosynthesis cluster transcription factor 1 (625 aa).

2 disordered regions span residues 1-83 (MATE…ATQD) and 466-496 (PMSA…LPAS). The segment covering 46 to 59 (TPSPSTPANPNSAS) has biased composition (low complexity). Residues 73–132 (KNQKRQRATQDQLTTLEQEFAKNPTPTATVRDRIAEEINMTERSVQIWFQNRRAKIKLMA) constitute a DNA-binding region (homeobox). Polar residues predominate over residues 467–496 (MSATTAPSPSEYNSPSFFSQAPENTPLPAS).

The protein resides in the nucleus. Transcriptional regulator; part of the gene cluster that mediates the biosynthesis of pyriculol and pyriculariol, two heptaketides that induce lesion formation upon application on rice leaves but are dispensable for pathogenicity. With TRF1, negatively regulates the expression of the gene cluster and the subsequent pyriculol and pyriculariol production. In Pyricularia oryzae (strain 70-15 / ATCC MYA-4617 / FGSC 8958) (Rice blast fungus), this protein is Pyriculol/pyriculariol biosynthesis cluster transcription factor 1.